A 520-amino-acid chain; its full sequence is Acetylcholine receptor subunit delta (520 aa).

The N-terminal stretch at M1–G24 is a signal peptide. Topologically, residues L25 to K248 are extracellular. N100, N167, and N193 each carry an N-linked (GlcNAc...) asparagine glycan. C154 and C168 form a disulfide bridge. The next 3 membrane-spanning stretches (helical) occupy residues P249 to L273, T281 to S299, and F315 to I336. At H337–R474 the chain is on the cytoplasmic side. Y393 bears the Phosphotyrosine; by Tyr-kinases mark. A helical transmembrane segment spans residues L475–L493.

The protein belongs to the ligand-gated ion channel (TC 1.A.9) family. Acetylcholine receptor (TC 1.A.9.1) subfamily. Delta/CHRND sub-subfamily. As to quaternary structure, pentamer of two alpha chains, and one each of the beta, delta, and gamma (in immature muscle) or epsilon (in mature muscle) chains. The muscle heteropentamer composed of alpha-1, beta-1, delta, epsilon subunits interacts with the alpha-conotoxin ImII.

The protein resides in the postsynaptic cell membrane. Its subcellular location is the cell membrane. The enzyme catalyses K(+)(in) = K(+)(out). The catalysed reaction is Na(+)(in) = Na(+)(out). Functionally, after binding acetylcholine, the AChR responds by an extensive change in conformation that affects all subunits and leads to opening of an ion-conducting channel across the plasma membrane. The sequence is that of Acetylcholine receptor subunit delta (Chrnd) from Mus musculus (Mouse).